Consider the following 81-residue polypeptide: Protein I5 homolog (81 aa).

The next 2 membrane-spanning stretches (helical) occupy residues 8 to 28 (LITI…FSLV) and 53 to 73 (MEIF…AAYI).

It belongs to the Chordopoxvirinae I5 family.

The protein resides in the virion membrane. In Vertebrata (FPV), this protein is Protein I5 homolog.